A 238-amino-acid chain; its full sequence is 2-C-methyl-D-erythritol 4-phosphate cytidylyltransferase (238 aa).

It belongs to the IspD/TarI cytidylyltransferase family. IspD subfamily.

It carries out the reaction 2-C-methyl-D-erythritol 4-phosphate + CTP + H(+) = 4-CDP-2-C-methyl-D-erythritol + diphosphate. It participates in isoprenoid biosynthesis; isopentenyl diphosphate biosynthesis via DXP pathway; isopentenyl diphosphate from 1-deoxy-D-xylulose 5-phosphate: step 2/6. Its function is as follows. Catalyzes the formation of 4-diphosphocytidyl-2-C-methyl-D-erythritol from CTP and 2-C-methyl-D-erythritol 4-phosphate (MEP). The protein is 2-C-methyl-D-erythritol 4-phosphate cytidylyltransferase of Salinibacter ruber (strain DSM 13855 / M31).